The chain runs to 137 residues: Large ribosomal subunit protein uL16 (137 aa).

It belongs to the universal ribosomal protein uL16 family. In terms of assembly, part of the 50S ribosomal subunit.

Functionally, binds 23S rRNA and is also seen to make contacts with the A and possibly P site tRNAs. The sequence is that of Large ribosomal subunit protein uL16 from Acinetobacter baumannii (strain AB307-0294).